The chain runs to 319 residues: Acetyl-coenzyme A carboxylase carboxyl transferase subunit alpha (319 aa).

A CoA carboxyltransferase C-terminal domain is found at 35 to 296 (NIDEEVHRLR…KTQLLADLAD (262 aa)).

Belongs to the AccA family. As to quaternary structure, acetyl-CoA carboxylase is a heterohexamer composed of biotin carboxyl carrier protein (AccB), biotin carboxylase (AccC) and two subunits each of ACCase subunit alpha (AccA) and ACCase subunit beta (AccD).

The protein localises to the cytoplasm. It carries out the reaction N(6)-carboxybiotinyl-L-lysyl-[protein] + acetyl-CoA = N(6)-biotinyl-L-lysyl-[protein] + malonyl-CoA. It participates in lipid metabolism; malonyl-CoA biosynthesis; malonyl-CoA from acetyl-CoA: step 1/1. In terms of biological role, component of the acetyl coenzyme A carboxylase (ACC) complex. First, biotin carboxylase catalyzes the carboxylation of biotin on its carrier protein (BCCP) and then the CO(2) group is transferred by the carboxyltransferase to acetyl-CoA to form malonyl-CoA. The protein is Acetyl-coenzyme A carboxylase carboxyl transferase subunit alpha of Cronobacter sakazakii (strain ATCC BAA-894) (Enterobacter sakazakii).